The primary structure comprises 221 residues: Cutinase 3 (221 aa).

A signal peptide spans 1-17 (MRFHTILLAALASLVIA). 2 disulfides stabilise this stretch: cysteine 44–cysteine 122 and cysteine 70–cysteine 84. The active-site Nucleophile is the serine 133. A disulfide bridge connects residues cysteine 184 and cysteine 191. Aspartate 188 is a catalytic residue. Residue histidine 201 is the Proton donor/acceptor of the active site.

Belongs to the cutinase family.

The protein resides in the secreted. It catalyses the reaction cutin + H2O = cutin monomers.. Catalyzes the hydrolysis of complex carboxylic polyesters found in the cell wall of plants. Degrades cutin, a macromolecule that forms the structure of the plant cuticle. Also degrades suberin, a specialized macromolecule found in the cell wall of various plant tissues. This is Cutinase 3 from Emericella nidulans (strain FGSC A4 / ATCC 38163 / CBS 112.46 / NRRL 194 / M139) (Aspergillus nidulans).